The primary structure comprises 104 residues: ESAT-6-like protein (104 aa).

The stretch at 12-43 forms a coiled coil; sequence MAQAAQDIEQSANAIRGMQNQLASAKDQLRSH.

Belongs to the WXG100 family. CFP-10 subfamily. As to quaternary structure, in isolation forms a homodimer. Forms a tight 1:1 complex with EsxA. Forms a complex with EsxA and EccC, probably wholly mediated by EsxB; binds in a pocket in the third FtsK (ATPase) domain of EccC (residues 1163-1208).

It localises to the secreted. May help regulate assembly and function of the type VII secretion system (T7SS). Binds to EccC and induces its multimerization. May serve as a chaperone for EsxA. This chain is ESAT-6-like protein, found in Thermomonospora curvata (strain ATCC 19995 / DSM 43183 / JCM 3096 / KCTC 9072 / NBRC 15933 / NCIMB 10081 / Henssen B9).